The primary structure comprises 196 residues: Zinc finger C2H2 protein ECU03_0940 (196 aa).

2 C2H2-type zinc fingers span residues 130 to 155 (YACE…KEGH) and 166 to 191 (YVCP…KHYH).

The chain is Zinc finger C2H2 protein ECU03_0940 from Encephalitozoon cuniculi (strain GB-M1) (Microsporidian parasite).